A 445-amino-acid chain; its full sequence is MTSRIELARVDLRGRTPSTAELRAALPRGGVDVDSVLHHVRPVVEAVRERGAAAALEFGEKFDGVVPATVRVPAAELARALDELDPAVRAALEESIARARRVHADQRRTDTTTEVVPGGTVTERWVPVARVGLYVPGGNAVYPSSVVMNVVPAQTAGVGSLVVASPPQANFGGLPHPTILAAAALLGVEEVWAVGGAQAVALLSYGGTDTDGAPLDPVDLITGPGNIYVTAAKRLCRGLVGIDAEAGPTEIAILADATADPAHVAADLISQAEHDVLAASVLVTDSVALADAVDAALTAQLAVVKHAERVRTALTGKQSGTVLVDDITQGLRVVDAYAAEHLEIQTADASAVAARVRSAGAVFVGPYAPVSLGDYCAGSNHVLPTAGCARHSSGLSVQTFLRGIHVVEYTEAALKDVAGHVVALADAEDLPAHGQAVTVRFEALS.

NAD(+)-binding residues include tyrosine 134, glutamine 198, and asparagine 226. 3 residues coordinate substrate: threonine 249, glutamine 271, and histidine 274. 2 residues coordinate Zn(2+): glutamine 271 and histidine 274. Active-site proton acceptor residues include glutamate 340 and histidine 341. Substrate contacts are provided by histidine 341, aspartate 374, glutamate 428, and histidine 433. Aspartate 374 lines the Zn(2+) pocket. Histidine 433 lines the Zn(2+) pocket.

It belongs to the histidinol dehydrogenase family. Zn(2+) is required as a cofactor.

It catalyses the reaction L-histidinol + 2 NAD(+) + H2O = L-histidine + 2 NADH + 3 H(+). The protein operates within amino-acid biosynthesis; L-histidine biosynthesis; L-histidine from 5-phospho-alpha-D-ribose 1-diphosphate: step 9/9. In terms of biological role, catalyzes the sequential NAD-dependent oxidations of L-histidinol to L-histidinaldehyde and then to L-histidine. In Nocardia farcinica (strain IFM 10152), this protein is Histidinol dehydrogenase.